A 577-amino-acid chain; its full sequence is DNA primase (577 aa).

Residues 40-64 (CPFHHDKTPSFTVSNEKQFYYCFGC) form a CHC2-type zinc finger. In terms of domain architecture, Toprim spans 255–337 (VYLLVVEGYI…KKTLKFILLP (83 aa)). Positions 261, 305, and 307 each coordinate Mg(2+).

It belongs to the DnaG primase family. Monomer. Interacts with DnaB. It depends on Zn(2+) as a cofactor. Requires Mg(2+) as cofactor.

It carries out the reaction ssDNA + n NTP = ssDNA/pppN(pN)n-1 hybrid + (n-1) diphosphate.. RNA polymerase that catalyzes the synthesis of short RNA molecules used as primers for DNA polymerase during DNA replication. In Buchnera aphidicola subsp. Acyrthosiphon pisum (strain APS) (Acyrthosiphon pisum symbiotic bacterium), this protein is DNA primase.